Here is a 493-residue protein sequence, read N- to C-terminus: Neisserial heparin binding antigen (493 aa).

A signal peptide spans 1–22; that stretch reads MKEMMMFKRSVIAMACIFALSA. A lipid anchor (N-palmitoyl cysteine) is attached at cysteine 23. Cysteine 23 carries the S-diacylglycerol cysteine lipid modification. The segment at 27–206 is disordered; it reads GGGSPDVKSA…NPAPANGGSN (180 aa). The span at 48 to 58 shows a compositional bias: basic and acidic residues; the sequence is SEKETEAKEDA. Positions 59–75 are enriched in low complexity; sequence PQAGSQGQGAPSAQGSQ. 2 stretches are compositionally biased toward polar residues: residues 106 to 123 and 132 to 147; these read DMPQ…NHTP and MENQ…QPAN. Over residues 165-188 the composition is skewed to low complexity; the sequence is AGGQNAGNTAAQGANQAGNNQAAG. The short motif at 301 to 311 is the Arg-rich motif element; sequence RFRRSARSRRS.

This sequence belongs to the NHBA family. In terms of assembly, the C-terminal beta-barrel forms a monomer. In terms of processing, cleaved in vivo by the Neisserial phase-variable autotransporter/serine protease NalP to give 2 fragments. The N-terminus remains in the cell outer membrane while the C-terminus (beginning on Ser-298) is soluble; this soluble fragment is called C2. Cleaved in vitro by human lactoferrin (LTF, between Arg-310 and Ser-311), this fragment is called C1. Recombinant and cell surface protein is cleaved by human saliva kallikrein (KLK1) between Ser-308 and Arg-309; in saliva kallikrein is more active on NHBA than lactoferrin. Human plasma kallikrein (KLKB1) cleaves in a similar manner to KLK1.

It localises to the cell outer membrane. A major human immunogenic protein detected in patients recovering from meningitidis, where it induces bactericidal antibodies. Binds human cells, heparin and heparan sulfate proteoglycan in vitro via the Arg-rich motif. Heparin-binding to this protein protects bacteria against killing by bactericidal antibodies (serum killing). The bacteria binds a number of human extracellular sialyated and/or sulfated glycans via this protein, including chondroitin sulfate, heparin and ganglioside GT3. Whole protein binds DNA. In terms of biological role, plays a role in extracellular-DNA (eDNA) mediated biofilm formation. In some strains (including cc32 strain H44/76 but not cc11 strain B16B6) eDNA stimulates biofilm formation. When NHBA is not processed by NalP, biofilm formation increases. This is probably because the number of positively charged, NHBA- and IgA-derived DNA-binding peptides on the cell surface rises, resulting in increased DNA-binding peptides and increased biofilm formation. The polypeptide is Neisserial heparin binding antigen (Neisseria meningitidis serogroup B / serotype 15 (strain H44/76)).